Reading from the N-terminus, the 206-residue chain is 2-oxoglutarate-dependent dioxygenase iboH (206 aa).

A Fe2OG dioxygenase domain is found at 51–157 (PSTTTLVLLH…RYSIAYFLRP (107 aa)). Fe cation contacts are provided by His-75, Asp-77, and His-134. Position 148 (Arg-148) interacts with 2-oxoglutarate.

This sequence belongs to the iron/ascorbate-dependent oxidoreductase family. It depends on Fe(2+) as a cofactor.

It carries out the reaction L-glutamate + 2-oxoglutarate + O2 = (3R)-3-hydroxy-L-glutamate + succinate + CO2. The protein operates within secondary metabolite biosynthesis. Functionally, 2-oxoglutarate-dependent dioxygenase; part of the gene cluster that mediates the biosynthesis of the psychoactive metabolites ibotenic acid and muscimol. The first committed step is glutamate hydroxylation by the 2-oxoglutarate-dependent dioxygenase iboH, and the last step is decarboxylation of ibotenic acid to muscimol by the decarboxylase iboD. The order of the intermediate reactions is somewhat ambiguous. IboA likely activates the carboxylic acid at position 5 to introduce an amide bond, and the flavin monooxygenase iboF generates the N-O bond. There are several options for the latter step. One option is that iboF directly hydroxylates the amide nitrogen formed by iboA to produce a hydroxamic acid species. Another option is that iboF hydroxylates an external N-containing compound, whose resulting N-O bond is subsequently introduced into the hydroxyglutamate scaffold. The paralogous PLP-dependent cystathionine gamma-synthase-like enzymes iboG1 and iboG2 are likely involved in substitution of the OH group at position 3 by the O-N moiety. The first cyclic intermediate is most probably tricholomic acid which is likely desaturated to ibotenic acid by the cytochrome P450 monooxygenase iboC. The sequence is that of 2-oxoglutarate-dependent dioxygenase iboH from Amanita muscaria (strain Koide BX008).